We begin with the raw amino-acid sequence, 122 residues long: Large ribosomal subunit protein uL14 (122 aa).

Belongs to the universal ribosomal protein uL14 family. In terms of assembly, part of the 50S ribosomal subunit. Forms a cluster with proteins L3 and L19. In the 70S ribosome, L14 and L19 interact and together make contacts with the 16S rRNA in bridges B5 and B8.

Its function is as follows. Binds to 23S rRNA. Forms part of two intersubunit bridges in the 70S ribosome. In Syntrophobacter fumaroxidans (strain DSM 10017 / MPOB), this protein is Large ribosomal subunit protein uL14.